The chain runs to 62 residues: Small ribosomal subunit protein eS31 (62 aa).

Zn(2+) contacts are provided by Cys29, Cys32, Cys48, and Cys51. A C4-type zinc finger spans residues Cys29–Cys51.

This sequence belongs to the eukaryotic ribosomal protein eS31 family. In terms of assembly, part of the 30S ribosomal subunit. It depends on Zn(2+) as a cofactor.

The protein is Small ribosomal subunit protein eS31 of Hyperthermus butylicus (strain DSM 5456 / JCM 9403 / PLM1-5).